Reading from the N-terminus, the 391-residue chain is UPF0328 protein ECU06_1650 (391 aa).

This sequence belongs to the UPF0328 family.

This Encephalitozoon cuniculi (strain GB-M1) (Microsporidian parasite) protein is UPF0328 protein ECU06_1650.